The chain runs to 424 residues: UDP-glycosyltransferase 76H1 (424 aa).

Residues serine 248, 306-307, 324-332, and 346-349 each bind UDP-alpha-D-glucose; these read WA, HCGWNSTIE, and FADQ.

The protein belongs to the UDP-glycosyltransferase family.

In terms of biological role, may glycosylate diterpenes or flavonols in leaves. The protein is UDP-glycosyltransferase 76H1 of Stevia rebaudiana (Stevia).